The following is a 344-amino-acid chain: tRNA N6-adenosine threonylcarbamoyltransferase (344 aa).

H113 and H117 together coordinate Fe cation. Residues 135-139 (LVSGG), D169, G182, D186, and N278 each bind substrate. D306 is a Fe cation binding site. Positions 325–344 (ESPISVGTDPSLSVETPQVF) are disordered. Residues 326–344 (SPISVGTDPSLSVETPQVF) show a composition bias toward polar residues.

This sequence belongs to the KAE1 / TsaD family. Fe(2+) is required as a cofactor.

The protein resides in the cytoplasm. It carries out the reaction L-threonylcarbamoyladenylate + adenosine(37) in tRNA = N(6)-L-threonylcarbamoyladenosine(37) in tRNA + AMP + H(+). Required for the formation of a threonylcarbamoyl group on adenosine at position 37 (t(6)A37) in tRNAs that read codons beginning with adenine. Is involved in the transfer of the threonylcarbamoyl moiety of threonylcarbamoyl-AMP (TC-AMP) to the N6 group of A37, together with TsaE and TsaB. TsaD likely plays a direct catalytic role in this reaction. The polypeptide is tRNA N6-adenosine threonylcarbamoyltransferase (Corynebacterium glutamicum (strain ATCC 13032 / DSM 20300 / JCM 1318 / BCRC 11384 / CCUG 27702 / LMG 3730 / NBRC 12168 / NCIMB 10025 / NRRL B-2784 / 534)).